Consider the following 233-residue polypeptide: MIAYAIGLLGLLIASIQDIKSREIENYIWIGMAVIGLLLSTYLSFTTGNFMPIISSISGFIICFIIGYLMFVLGIGGADGKILMGMGALIPSYAFPVYSSLQPLYTMEYIPWFPLLVFFNGVILMIVLPIYLFFKNLSNGVKPKKLKEYVLMLVGEYITVAEAKKGNKVVLGKGKDVKLIPSVNDDKNYDLSKYKDTQYVWATPELPLLVPIALSYIITPFLGDKILSIILPM.

Met1 is a topological domain (cytoplasmic). Residues 2-18 (IAYAIGLLGLLIASIQD) traverse the membrane as a helical segment. Residues 19–23 (IKSRE) are Extracellular-facing. A helical transmembrane segment spans residues 24 to 46 (IENYIWIGMAVIGLLLSTYLSFT). Residues 47–49 (TGN) lie on the Cytoplasmic side of the membrane. A helical transmembrane segment spans residues 50-72 (FMPIISSISGFIICFIIGYLMFV). At 73-78 (LGIGGA) the chain is on the extracellular side. The chain crosses the membrane as a helical span at residues 79 to 89 (DGKILMGMGAL). Residues 90–110 (IPSYAFPVYSSLQPLYTMEYI) lie on the Cytoplasmic side of the membrane. Residues 111 to 139 (PWFPLLVFFNGVILMIVLPIYLFFKNLSN) traverse the membrane as a helical segment. Residues 140-207 (GVKPKKLKEY…QYVWATPELP (68 aa)) are Extracellular-facing. A helical membrane pass occupies residues 208-219 (LLVPIALSYIIT). At 220–233 (PFLGDKILSIILPM) the chain is on the cytoplasmic side.

Belongs to the peptidase A24 family. Archaeal preflagellin peptidase subfamily.

The protein resides in the cell membrane. The enzyme catalyses Cleaves the signal peptide of 3 to 12 amino acids from the N-terminal of preflagellin, usually at Arg-Gly-|- or Lys-Gly-|-, to release flagellin.. Its function is as follows. Cleaves the N-terminal leader peptide from preflagellins. The processing of preflagellins is necessary for assembly of flagellins into a flagellum structure. The sequence is that of Preflagellin peptidase (flaK) from Methanococcus voltae.